A 145-amino-acid polypeptide reads, in one-letter code: Galectin-5 (145 aa).

S2 is modified (N-acetylserine). Residues 17-145 (FFTSIPNGLY…GDIQLTHVET (129 aa)) enclose the Galectin domain. Position 77–83 (77–83 (WGPEERS)) interacts with a beta-D-galactoside.

As to quaternary structure, monomer. Erythrocytes.

Its function is as follows. May function in erythrocyte differentiation. The sequence is that of Galectin-5 (Lgals5) from Rattus norvegicus (Rat).